A 245-amino-acid polypeptide reads, in one-letter code: 2,3-bisphosphoglycerate-dependent phosphoglycerate mutase (245 aa).

Substrate-binding positions include 8–15 (RHGQSLWN), 21–22 (TG), arginine 60, 87–90 (ERHY), lysine 98, 114–115 (RR), and 183–184 (GN). Histidine 9 serves as the catalytic Tele-phosphohistidine intermediate. Glutamate 87 (proton donor/acceptor) is an active-site residue.

The protein belongs to the phosphoglycerate mutase family. BPG-dependent PGAM subfamily.

It catalyses the reaction (2R)-2-phosphoglycerate = (2R)-3-phosphoglycerate. The protein operates within carbohydrate degradation; glycolysis; pyruvate from D-glyceraldehyde 3-phosphate: step 3/5. In terms of biological role, catalyzes the interconversion of 2-phosphoglycerate and 3-phosphoglycerate. The protein is 2,3-bisphosphoglycerate-dependent phosphoglycerate mutase of Bacillus mycoides (strain KBAB4) (Bacillus weihenstephanensis).